Consider the following 291-residue polypeptide: ATP synthase gamma chain (291 aa).

Belongs to the ATPase gamma chain family. As to quaternary structure, F-type ATPases have 2 components, CF(1) - the catalytic core - and CF(0) - the membrane proton channel. CF(1) has five subunits: alpha(3), beta(3), gamma(1), delta(1), epsilon(1). CF(0) has three main subunits: a, b and c.

The protein localises to the cell membrane. Functionally, produces ATP from ADP in the presence of a proton gradient across the membrane. The gamma chain is believed to be important in regulating ATPase activity and the flow of protons through the CF(0) complex. This is ATP synthase gamma chain from Buchnera aphidicola subsp. Baizongia pistaciae (strain Bp).